Reading from the N-terminus, the 214-residue chain is Adenylate kinase (214 aa).

ATP is bound at residue 10 to 15 (GSGKGT). The tract at residues 30–59 (STGDMLRAAVREGTPLGMEAKKIMDAGQLV) is NMP. AMP is bound by residues T31, R36, 57-59 (QLV), 85-88 (GFPR), and Q92. The tract at residues 122 to 159 (GRRVHPASGRTYHVVFNPPKVEGRDDETGEPLVQREDD) is LID. Residues R123 and 132–133 (TY) contribute to the ATP site. AMP is bound by residues R156 and R167. Residue G200 coordinates ATP.

The protein belongs to the adenylate kinase family. In terms of assembly, monomer.

The protein resides in the cytoplasm. It carries out the reaction AMP + ATP = 2 ADP. It functions in the pathway purine metabolism; AMP biosynthesis via salvage pathway; AMP from ADP: step 1/1. In terms of biological role, catalyzes the reversible transfer of the terminal phosphate group between ATP and AMP. Plays an important role in cellular energy homeostasis and in adenine nucleotide metabolism. In Methylococcus capsulatus (strain ATCC 33009 / NCIMB 11132 / Bath), this protein is Adenylate kinase.